A 147-amino-acid chain; its full sequence is Basic phospholipase A2 beta-bungarotoxin A2 chain (147 aa).

The signal sequence occupies residues 1 to 19 (MYPAHLLVLSAVCVSLLGA). Residues 20-27 (ANIPPYPL) constitute a propeptide that is removed on maturation. 6 disulfide bridges follow: Cys54–Cys146, Cys56–Cys72, Cys71–Cys127, Cys78–Cys120, Cys88–Cys113, and Cys106–Cys118. Ca(2+)-binding residues include Tyr55, Gly57, and Gly59. His75 is a catalytic residue. Residue Asp76 coordinates Ca(2+). The active site involves Asp121.

The protein belongs to the phospholipase A2 family. Group I subfamily. D49 sub-subfamily. As to quaternary structure, heterodimer; disulfide-linked. The A chains have phospholipase A2 activity and the B chains show homology with the basic protease inhibitors. It depends on Ca(2+) as a cofactor. In terms of tissue distribution, expressed by the venom gland.

It localises to the secreted. It carries out the reaction a 1,2-diacyl-sn-glycero-3-phosphocholine + H2O = a 1-acyl-sn-glycero-3-phosphocholine + a fatty acid + H(+). In terms of biological role, snake venom phospholipase A2 (PLA2) that inhibits neuromuscular transmission by blocking acetylcholine release from the nerve termini. PLA2 catalyzes the calcium-dependent hydrolysis of the 2-acyl groups in 3-sn-phosphoglycerides. The polypeptide is Basic phospholipase A2 beta-bungarotoxin A2 chain (Bungarus caeruleus (Indian krait)).